The chain runs to 331 residues: Mitochondrial carrier protein CoAc1 (331 aa).

Transmembrane regions (helical) follow at residues 16-36 (LVDT…AGAI), 79-99 (FYKG…LHYM), 123-143 (LVAG…LDLA), 193-213 (GIGP…YIYE), 231-251 (LPCG…LDVV), and 292-312 (FAGL…GFTV). 3 Solcar repeats span residues 21–107 (PVLA…YRDW), 117–218 (SGPI…LKRH), and 225–319 (NSVR…MKSW).

The protein belongs to the mitochondrial carrier (TC 2.A.29) family. Expressed throughout the plant.

It localises to the mitochondrion inner membrane. In terms of biological role, required for the accumulation of coenzyme A in the mitochondrial matrix. The sequence is that of Mitochondrial carrier protein CoAc1 from Arabidopsis thaliana (Mouse-ear cress).